A 79-amino-acid chain; its full sequence is Large ribosomal subunit protein uL29 (79 aa).

This sequence belongs to the universal ribosomal protein uL29 family.

This Tropheryma whipplei (strain Twist) (Whipple's bacillus) protein is Large ribosomal subunit protein uL29.